We begin with the raw amino-acid sequence, 529 residues long: Biotin-dependent 3-methylcrotonyl-coenzyme A carboxylase beta1 subunit (529 aa).

The CoA carboxyltransferase N-terminal domain maps to 16–272 (HRRLVAELNN…CEPAQWDVRR (257 aa)). The CoA carboxyltransferase C-terminal domain maps to 275–521 (EPKYPQAELY…SLCAHAPLDQ (247 aa)).

Belongs to the AccD/PCCB family. The biotin-dependent acyl-CoA carboxylase complex is composed of AccA1, which contains the biotin carboxylase (BC) and biotin carboxyl carrier protein (BCCP) domains, and AccD1, which contains the carboxyl transferase (CT) domain. The AccA1/AccD1 complex forms a dodecamer.

It catalyses the reaction 3-methylbut-2-enoyl-CoA + N(6)-carboxybiotinyl-L-lysyl-[protein] = 3-methyl-(2E)-glutaconyl-CoA + N(6)-biotinyl-L-lysyl-[protein]. It functions in the pathway amino-acid degradation; L-leucine degradation. Its function is as follows. Component of a biotin-dependent acyl-CoA carboxylase complex. This subunit transfers the CO2 from carboxybiotin to the CoA ester substrate. When associated with the alpha1 subunit AccA1, is involved in branched amino-acid catabolism with methylcrotonyl coenzyme A as the substrate. Shows residual with propionyl-CoA and acetyl-CoA. The protein is Biotin-dependent 3-methylcrotonyl-coenzyme A carboxylase beta1 subunit of Mycobacterium tuberculosis (strain ATCC 25618 / H37Rv).